The primary structure comprises 210 residues: Kinetochore protein Spc25 (210 aa).

Positions 42–106 form a coiled coil; it reads TMENIKRQQH…KKKQERDKLI (65 aa).

This sequence belongs to the SPC25 family. As to quaternary structure, component of the Ndc80 complex, which is composed of Ndc80, Nuf2 and Spc25.

It is found in the nucleus. Its subcellular location is the chromosome. The protein resides in the centromere. The protein localises to the kinetochore. Functionally, acts as a component of the essential kinetochore-associated Ndc80 complex, which is required for chromosome segregation and spindle checkpoint activity during meiosis and mitosis. Required for kinetochore integrity and the organization of stable microtubule binding sites in the outer plate of the kinetochore. Participates in SAC signaling that responds specifically to disruptions in spindle microtubule dynamics. The NDC80 complex synergistically enhances the affinity of the SKA1 complex for microtubules and may allow the NDC80 complex to track depolymerizing microtubules. This Drosophila virilis (Fruit fly) protein is Kinetochore protein Spc25.